Here is a 176-residue protein sequence, read N- to C-terminus: Ribosome rescue factor SmrB (176 aa).

The Smr domain occupies 93–168 (LDLHGYRQSE…GDAALLVLID (76 aa)).

This sequence belongs to the SmrB family. Associates with collided ribosomes, but not with correctly translating polysomes.

Its function is as follows. Acts as a ribosome collision sensor. Detects stalled/collided disomes (pairs of ribosomes where the leading ribosome is stalled and a second ribosome has collided with it) and endonucleolytically cleaves mRNA at the 5' boundary of the stalled ribosome. Stalled/collided disomes form a new interface (primarily via the 30S subunits) that binds SmrB. Cleaved mRNA becomes available for tmRNA ligation, leading to ribosomal subunit dissociation and rescue of stalled ribosomes. This Shewanella sp. (strain MR-4) protein is Ribosome rescue factor SmrB.